Reading from the N-terminus, the 137-residue chain is Large ribosomal subunit protein eL28 (137 aa).

N-acetylserine is present on S2. Glycyl lysine isopeptide (Lys-Gly) (interchain with G-Cter in SUMO2) cross-links involve residues K58 and K65. S115 carries the phosphoserine modification.

The protein belongs to the eukaryotic ribosomal protein eL28 family. In terms of assembly, component of the large ribosomal subunit.

It is found in the cytoplasm. Functionally, component of the large ribosomal subunit. The ribosome is a large ribonucleoprotein complex responsible for the synthesis of proteins in the cell. In Homo sapiens (Human), this protein is Large ribosomal subunit protein eL28 (RPL28).